The sequence spans 378 residues: Erythronate-4-phosphate dehydrogenase (378 aa).

Substrate contacts are provided by Ser45 and Thr67. Residue Asp147 coordinates NAD(+). Arg209 is a catalytic residue. Asp233 provides a ligand contact to NAD(+). Glu238 is a catalytic residue. His255 (proton donor) is an active-site residue. Gly258 contributes to the NAD(+) binding site. Tyr259 provides a ligand contact to substrate.

It belongs to the D-isomer specific 2-hydroxyacid dehydrogenase family. PdxB subfamily. Homodimer.

The protein resides in the cytoplasm. It catalyses the reaction 4-phospho-D-erythronate + NAD(+) = (R)-3-hydroxy-2-oxo-4-phosphooxybutanoate + NADH + H(+). The protein operates within cofactor biosynthesis; pyridoxine 5'-phosphate biosynthesis; pyridoxine 5'-phosphate from D-erythrose 4-phosphate: step 2/5. Functionally, catalyzes the oxidation of erythronate-4-phosphate to 3-hydroxy-2-oxo-4-phosphonooxybutanoate. The chain is Erythronate-4-phosphate dehydrogenase from Shewanella denitrificans (strain OS217 / ATCC BAA-1090 / DSM 15013).